The following is a 601-amino-acid chain: Terpenoid synthase 17 (601 aa).

Mg(2+)-binding residues include Asn-354, Asp-358, Asn-497, Thr-501, and Glu-505. The DDXXD motif; degenerate motif lies at 354–358; the sequence is NDTCD.

The protein belongs to the terpene synthase family. Tpsa subfamily. Mg(2+) serves as cofactor. It depends on Mn(2+) as a cofactor. In terms of tissue distribution, expressed exclusively in flowers.

The protein resides in the cytoplasm. The protein operates within secondary metabolite biosynthesis; terpenoid biosynthesis. The chain is Terpenoid synthase 17 (TPS17) from Arabidopsis thaliana (Mouse-ear cress).